The primary structure comprises 462 residues: UDP-N-acetylmuramoylalanine--D-glutamate ligase (462 aa).

111–117 contacts ATP; the sequence is GTNGKTT.

It belongs to the MurCDEF family.

It localises to the cytoplasm. The enzyme catalyses UDP-N-acetyl-alpha-D-muramoyl-L-alanine + D-glutamate + ATP = UDP-N-acetyl-alpha-D-muramoyl-L-alanyl-D-glutamate + ADP + phosphate + H(+). It participates in cell wall biogenesis; peptidoglycan biosynthesis. Cell wall formation. Catalyzes the addition of glutamate to the nucleotide precursor UDP-N-acetylmuramoyl-L-alanine (UMA). The sequence is that of UDP-N-acetylmuramoylalanine--D-glutamate ligase from Trichodesmium erythraeum (strain IMS101).